We begin with the raw amino-acid sequence, 735 residues long: Alpha-adducin (735 aa).

At Met1 the chain carries N-acetylmethionine. The segment covering 1–11 has biased composition (low complexity); it reads MNGDTRAAVVT. The tract at residues 1–21 is disordered; that stretch reads MNGDTRAAVVTSPPPTTAPHK. Phosphoserine is present on residues Ser12, Ser59, and Ser64. Phosphothreonine is present on Thr331. Residues Ser334, Ser353, and Ser355 each carry the phosphoserine modification. Thr358 is modified (phosphothreonine). Residues Ser364, Ser366, Ser408, and Ser427 each carry the phosphoserine modification. Disordered stretches follow at residues 418–487 and 576–735; these read GHSF…AVPN and RREV…KSDS. Thr429 bears the Phosphothreonine mark. A phosphoserine mark is found at Ser431 and Ser436. Residues 440 to 455 show a composition bias toward basic and acidic residues; sequence QQREKTRWLHSGRGDD. Thr445 is modified (phosphothreonine; by ROCK2). Phosphoserine is present on residues Ser464 and Ser465. Position 480 is a phosphothreonine; by ROCK2 (Thr480). Ser481 carries the phosphoserine; by PKA modification. The span at 576–601 shows a compositional bias: basic and acidic residues; sequence RREVERKQKGSEENLDETREQKEKSP. A phosphoserine mark is found at Ser586, Ser600, and Ser605. A Phosphothreonine modification is found at Thr610. Ser613 bears the Phosphoserine mark. Phosphothreonine is present on Thr614. A compositionally biased stretch (low complexity) spans 698 to 712; that stretch reads GSPMDPGSDGSPGKS. Phosphoserine occurs at positions 705, 708, and 712. Positions 713–735 are enriched in basic residues; sequence PSKKKKKFRTPSFLKKSKKKSDS. Ser714 carries the phosphoserine; by PKC modification. An interaction with calmodulin region spans residues 715–732; the sequence is KKKKKFRTPSFLKKSKKK. Ser724 is modified (phosphoserine; by PKA and PKC).

The protein belongs to the aldolase class II family. Adducin subfamily. As to quaternary structure, heterodimer of an alpha and a beta subunit or an alpha and a gamma subunit.

It localises to the cytoplasm. Its subcellular location is the cytoskeleton. The protein localises to the cell membrane. In terms of biological role, membrane-cytoskeleton-associated protein that promotes the assembly of the spectrin-actin network. Binds to calmodulin. The protein is Alpha-adducin (Add1) of Mus musculus (Mouse).